The chain runs to 95 residues: Large ribosomal subunit protein uL23 (95 aa).

Belongs to the universal ribosomal protein uL23 family. As to quaternary structure, part of the 50S ribosomal subunit. Contacts protein L29, and trigger factor when it is bound to the ribosome.

Functionally, one of the early assembly proteins it binds 23S rRNA. One of the proteins that surrounds the polypeptide exit tunnel on the outside of the ribosome. Forms the main docking site for trigger factor binding to the ribosome. This Deinococcus deserti (strain DSM 17065 / CIP 109153 / LMG 22923 / VCD115) protein is Large ribosomal subunit protein uL23.